Reading from the N-terminus, the 166-residue chain is UPF0304 protein VIBHAR_01542 (166 aa).

The protein belongs to the UPF0304 family.

This chain is UPF0304 protein VIBHAR_01542, found in Vibrio campbellii (strain ATCC BAA-1116).